We begin with the raw amino-acid sequence, 372 residues long: Bifunctional enzyme IspD/IspF (372 aa).

Positions 1–211 (MLDISLIMLG…SALKAPENEL (211 aa)) are 2-C-methyl-D-erythritol 4-phosphate cytidylyltransferase. The interval 212-372 (FVGSGFDVHE…SLKFYNWTQI (161 aa)) is 2-C-methyl-D-erythritol 2,4-cyclodiphosphate synthase. 2 residues coordinate a divalent metal cation: D218 and H220. Residues 218-220 (DVH) and 244-245 (HS) each bind 4-CDP-2-C-methyl-D-erythritol 2-phosphate. H252 lines the a divalent metal cation pocket. 4-CDP-2-C-methyl-D-erythritol 2-phosphate is bound by residues 266–268 (DIG), 271–275 (FPDTD), 342–345 (TTTE), F349, and R352.

The protein in the N-terminal section; belongs to the IspD/TarI cytidylyltransferase family. IspD subfamily. It in the C-terminal section; belongs to the IspF family. It depends on a divalent metal cation as a cofactor.

It carries out the reaction 2-C-methyl-D-erythritol 4-phosphate + CTP + H(+) = 4-CDP-2-C-methyl-D-erythritol + diphosphate. It catalyses the reaction 4-CDP-2-C-methyl-D-erythritol 2-phosphate = 2-C-methyl-D-erythritol 2,4-cyclic diphosphate + CMP. It functions in the pathway isoprenoid biosynthesis; isopentenyl diphosphate biosynthesis via DXP pathway; isopentenyl diphosphate from 1-deoxy-D-xylulose 5-phosphate: step 2/6. It participates in isoprenoid biosynthesis; isopentenyl diphosphate biosynthesis via DXP pathway; isopentenyl diphosphate from 1-deoxy-D-xylulose 5-phosphate: step 4/6. Its function is as follows. Bifunctional enzyme that catalyzes the formation of 4-diphosphocytidyl-2-C-methyl-D-erythritol from CTP and 2-C-methyl-D-erythritol 4-phosphate (MEP) (IspD), and catalyzes the conversion of 4-diphosphocytidyl-2-C-methyl-D-erythritol 2-phosphate (CDP-ME2P) to 2-C-methyl-D-erythritol 2,4-cyclodiphosphate (ME-CPP) with a corresponding release of cytidine 5-monophosphate (CMP) (IspF). The chain is Bifunctional enzyme IspD/IspF from Campylobacter concisus (strain 13826).